Here is a 4074-residue protein sequence, read N- to C-terminus: Fibrocystin (4074 aa).

The N-terminal stretch at 1–22 (MIVWLISLMSIEILLLAGPALS) is a signal peptide. 2 N-linked (GlcNAc...) asparagine glycosylation sites follow: N54 and N224. The IPT/TIG 1 domain maps to 258–310 (EILSVFPETGSLGGKTDIIITGDFFDNPALVTIAGVPCDIRHMSPRKIECTTR). One can recognise a PA14 domain in the interval 323 to 483 (AGNRGLLFEV…TWLNPDVVST (161 aa)). N-linked (GlcNAc...) asparagine glycosylation is found at N355, N385, N518, N527, N640, N710, N741, N822, N829, N868, N953, N966, N976, N1006, N1059, N1083, N1115, N1134, N1233, N1240, N1274, N1284, N1308, N1319, N1342, N1373, N1445, N1456, N1471, N1490, N1528, N1560, N1578, N1598, N1627, N1694, N1760, N1775, N1789, N1875, N1915, N1941, N1955, N2030, N2111, and N2140. The IPT/TIG 2 domain occupies 944 to 1000 (SLLIYIFGINFSGDPQALEIMVNKTNCKVIFSNQTNVICQTDLLPVGMHRLFMVVRP). IPT/TIG domains are found at residues 1018–1101 (PRLD…AFTY), 1107–1186 (PVIT…RSPG), and 1199–1274 (SIEP…WAGN). In terms of domain architecture, IPT/TIG 6 spans 1385–1464 (PWIMAISPTH…LNVTVIVNGL (80 aa)). The 69-residue stretch at 1573 to 1641 (HYFPKNFSIH…LVIEVDGLSY (69 aa)) folds into the IPT/TIG 7 domain. In terms of domain architecture, G8 1 spans 1928-2049 (HSWFPERVPQ…PEVTFTHLQA (122 aa)). 5 PbH1 repeats span residues 2245-2267 (TLGLKVDSNIFYNILGHALLVGT), 2288-2322 (EQGNIIRNNVIISISGTEGLSSPEMLTPSGIYILN), 2351-2373 (APLLSFTQNIAHSCTRYGLFIYP), 2383-2404 (RGPTLFQNFTVWGSAGGARISR), and 2405-2427 (SSNLHLKNFQVYSCRDFGIDILE). The N-linked (GlcNAc...) asparagine glycan is linked to N2390. N-linked (GlcNAc...) asparagine glycans are attached at residues N2431, N2467, N2531, N2549, N2579, N2591, N2749, N2764, N2972, and N3004. The stretch at 2460–2483 (RWELIISNTTFVNFDLTDCVSIRT) is one PbH1 6 repeat. One can recognise a G8 2 domain in the interval 2743 to 2869 (EGWGGHNHTI…PKKSWTRLAA (127 aa)). The stretch at 3029–3051 (SHGIILNDNIVFGTVGHGIDLEG) is one PbH1 7 repeat. The N-linked (GlcNAc...) asparagine glycan is linked to N3053. Residues 3082-3104 (AKDINLYGNVVAGSERIGFHIQG) form a PbH1 8 repeat. N-linked (GlcNAc...) asparagine glycosylation is found at N3136, N3165, N3221, N3484, N3702, N3721, and N3833. One copy of the PbH1 9 repeat lies at 3158 to 3183 (ENSVEIENITLVDNSIGLLATVYVSS). The helical transmembrane segment at 3854 to 3874 (IILAVSLCSVASWLALCCLVC) threads the bilayer. The interval 3871 to 3888 (CLVCCWFRKSKSRKIKSE) is ciliary targeting sequence (CST). Disordered stretches follow at residues 3896-3919 (NDQKSHIHMSSKHPRSQETKKEDT), 3943-3965 (NGVSRRKVSRRAVREEGSSREED), and 4031-4074 (LQGQ…QEQL). Basic and acidic residues-rich tracts occupy residues 3910 to 3919 (RSQETKKEDT) and 3954 to 3965 (AVREEGSSREED). The interval 3947–3976 (RRKVSRRAVREEGSSREEDVVPAPRIISIT) is nuclear localization signal (NLS).

Interacts with CAMLG. Interacts with PKD2. Interacts (via CST) with ARF4; this interaction allows an efficient PKHD1 trafficking to the cilium. Interacts (via CST) with RAB8A; this interaction controls trafficking through the endomembrane systeme and to the cilium. Interacts (via CST) with TULP3; this interaction allows PKHD1 trafficking to the cilium. Palmitoylated. Palmitoylation facilitates the trafficking to the cilia and membrane targeting. In terms of processing, N-glycosylated. Post-translationally, several proteolytic cleavages occur within the extracellular domain, whereas at least one cleavage occurs within the cytoplasmic domain. Cleaved by a probable proprotein convertase which produces an extracellular domain (polyductin extracellular domain, (PECD)) and a C-terminal fragment (polyductin transmembrane fragment (PTM)) which are tethered together by disulfide bonds. This extracellular domain (PECD) is then shed from the primary cilium by activation of a member of the ADAM metalloproteinase disintegrins family, resulting in concomitant release of an intra-cellular C-terminal fragment (ICD) via a gamma-secretase-dependent process. The proteolytic cleavage of the C-terminal intracellular fragment (ICD) is controlled by cytosolic calcium concentration and activation of PKC.

It localises to the cell membrane. The protein localises to the cytoplasm. The protein resides in the apical cell membrane. It is found in the cytoskeleton. Its subcellular location is the cilium basal body. It localises to the cell projection. The protein localises to the cilium. The protein resides in the spindle. It is found in the chromosome. Its subcellular location is the centromere. It localises to the nucleus. The protein localises to the secreted. The protein resides in the extracellular exosome. It is found in the endoplasmic reticulum. Its subcellular location is the golgi apparatus. Its function is as follows. Promotes ciliogenesis in renal epithelial cells and therefore participates in the tubules formation and/ or ensures the maintenance of the architecture of the lumen of the kidney. Has an impact on cellular symmetry by ensuring correct bipolar cell division through the regulation of centrosome duplication and mitotic spindle assembly and by maintaining oriented cell division (OCD) during tubular elongation through planar cell polarity (PCP) pathway. During epithelial cell morphogenesis, it also regulates cell-cell and cell-matrix adhesion and participates in cell motility. Promotes cell-cell contact through the positive regulation of PTK2 kinase activity leading to either positive regulation of epithelial cell proliferation through the HRAS/RAF1 pathways, or negative regulation of apoptosis through the PDK1/AKT1 pathway. May act in collecting-duct and biliary differentiation. May participate in the regulation of the cholangiocytes proliferation and the CCN2 production in an CXCL8-dependent manner. This is Fibrocystin from Canis lupus familiaris (Dog).